A 167-amino-acid chain; its full sequence is Phosphopantetheine adenylyltransferase (167 aa).

Ser9 contacts substrate. Residues 9–10 (SF) and His17 contribute to the ATP site. Substrate is bound by residues Lys41, Val78, and Arg92. ATP is bound by residues 93-95 (GLR), Glu103, and 128-134 (SRPITAT).

This sequence belongs to the bacterial CoaD family. In terms of assembly, homohexamer. Mg(2+) serves as cofactor.

The protein localises to the cytoplasm. It carries out the reaction (R)-4'-phosphopantetheine + ATP + H(+) = 3'-dephospho-CoA + diphosphate. Its pathway is cofactor biosynthesis; coenzyme A biosynthesis; CoA from (R)-pantothenate: step 4/5. Reversibly transfers an adenylyl group from ATP to 4'-phosphopantetheine, yielding dephospho-CoA (dPCoA) and pyrophosphate. The sequence is that of Phosphopantetheine adenylyltransferase from Rhizobium rhizogenes (strain K84 / ATCC BAA-868) (Agrobacterium radiobacter).